We begin with the raw amino-acid sequence, 406 residues long: Cysteine desulfurase IscS (406 aa).

Residues 75–76, Asn-155, Gln-183, and 203–205 each bind pyridoxal 5'-phosphate; these read AT and SSH. Lys-206 is modified (N6-(pyridoxal phosphate)lysine). Thr-243 is a binding site for pyridoxal 5'-phosphate. The active-site Cysteine persulfide intermediate is the Cys-330. Cys-330 lines the [2Fe-2S] cluster pocket.

This sequence belongs to the class-V pyridoxal-phosphate-dependent aminotransferase family. NifS/IscS subfamily. Homodimer. Forms a heterotetramer with IscU, interacts with other sulfur acceptors. Pyridoxal 5'-phosphate is required as a cofactor.

It is found in the cytoplasm. The catalysed reaction is (sulfur carrier)-H + L-cysteine = (sulfur carrier)-SH + L-alanine. It participates in cofactor biosynthesis; iron-sulfur cluster biosynthesis. Master enzyme that delivers sulfur to a number of partners involved in Fe-S cluster assembly, tRNA modification or cofactor biosynthesis. Catalyzes the removal of elemental sulfur atoms from cysteine to produce alanine. Functions as a sulfur delivery protein for Fe-S cluster synthesis onto IscU, an Fe-S scaffold assembly protein, as well as other S acceptor proteins. The polypeptide is Cysteine desulfurase IscS (Haemophilus ducreyi (strain 35000HP / ATCC 700724)).